The chain runs to 838 residues: Probable beta-glucosidase K (838 aa).

Asn-19 carries N-linked (GlcNAc...) asparagine glycosylation. The active site involves Asp-232. N-linked (GlcNAc...) asparagine glycans are attached at residues Asn-324 and Asn-489. The PA14 domain occupies 405 to 564; that stretch reads EGQPGLRMRF…DPELAIARAV (160 aa).

This sequence belongs to the glycosyl hydrolase 3 family.

The protein localises to the secreted. The catalysed reaction is Hydrolysis of terminal, non-reducing beta-D-glucosyl residues with release of beta-D-glucose.. It participates in glycan metabolism; cellulose degradation. In terms of biological role, beta-glucosidases are one of a number of cellulolytic enzymes involved in the degradation of cellulosic biomass. Catalyzes the last step releasing glucose from the inhibitory cellobiose. This is Probable beta-glucosidase K (bglK) from Emericella nidulans (strain FGSC A4 / ATCC 38163 / CBS 112.46 / NRRL 194 / M139) (Aspergillus nidulans).